The chain runs to 370 residues: tRNA-specific 2-thiouridylase MnmA (370 aa).

ATP is bound by residues Gly8–Ser15 and Met34. An interaction with target base in tRNA region spans residues Asn104–Asp106. The Nucleophile role is filled by Cys109. Cys109 and Cys202 are disulfide-bonded. Gly134 contacts ATP. An interaction with tRNA region spans residues Lys152–Gln154. Cys202 (cysteine persulfide intermediate) is an active-site residue. The interaction with tRNA stretch occupies residues Arg309–Tyr310.

The protein belongs to the MnmA/TRMU family.

It localises to the cytoplasm. It carries out the reaction S-sulfanyl-L-cysteinyl-[protein] + uridine(34) in tRNA + AH2 + ATP = 2-thiouridine(34) in tRNA + L-cysteinyl-[protein] + A + AMP + diphosphate + H(+). Catalyzes the 2-thiolation of uridine at the wobble position (U34) of tRNA, leading to the formation of s(2)U34. The polypeptide is tRNA-specific 2-thiouridylase MnmA (Metamycoplasma arthritidis (strain 158L3-1) (Mycoplasma arthritidis)).